We begin with the raw amino-acid sequence, 178 residues long: Thymidine kinase (178 aa).

Residue 13-20 (GPMFAGKS) participates in ATP binding. The active-site Proton acceptor is glutamate 85. Phenylalanine 115 is a substrate binding site. Residues cysteine 140 and cysteine 143 each coordinate Zn(2+). 159-163 (IEIIG) contributes to the substrate binding site. Residues cysteine 172 and cysteine 175 each contribute to the Zn(2+) site.

Belongs to the thymidine kinase family.

It catalyses the reaction thymidine + ATP = dTMP + ADP + H(+). The sequence is that of Thymidine kinase (TK) from Myxoma virus (strain Uriarra) (MYXV).